A 212-amino-acid polypeptide reads, in one-letter code: Noggin-2 (212 aa).

The N-terminal stretch at 1 to 23 is a signal peptide; that stretch reads MGSITRALPLLLLLLLCAHGTAS. The tract at residues 37–56 is disordered; the sequence is LPVPDLIENPDPEHDPREQD. The span at 47-56 shows a compositional bias: basic and acidic residues; sequence DPEHDPREQD. The N-linked (GlcNAc...) asparagine glycan is linked to Asn-84.

Belongs to the noggin family. As to quaternary structure, homodimer; disulfide-linked.

The protein localises to the secreted. Inhibitor of bone morphogenetic proteins (BMP) signaling. The chain is Noggin-2 (nog2) from Danio rerio (Zebrafish).